The sequence spans 277 residues: NADPH-dependent 7-cyano-7-deazaguanine reductase (277 aa).

I83 to S85 contacts substrate. An NADPH-binding site is contributed by S85–K86. C184 (thioimide intermediate) is an active-site residue. The active-site Proton donor is the D191. H223–E224 provides a ligand contact to substrate. R252–G253 is a binding site for NADPH.

Belongs to the GTP cyclohydrolase I family. QueF type 2 subfamily. As to quaternary structure, homodimer.

It is found in the cytoplasm. The enzyme catalyses 7-aminomethyl-7-carbaguanine + 2 NADP(+) = 7-cyano-7-deazaguanine + 2 NADPH + 3 H(+). It participates in tRNA modification; tRNA-queuosine biosynthesis. Its function is as follows. Catalyzes the NADPH-dependent reduction of 7-cyano-7-deazaguanine (preQ0) to 7-aminomethyl-7-deazaguanine (preQ1). The sequence is that of NADPH-dependent 7-cyano-7-deazaguanine reductase from Cupriavidus pinatubonensis (strain JMP 134 / LMG 1197) (Cupriavidus necator (strain JMP 134)).